The following is a 561-amino-acid chain: Centromere protein T (561 aa).

Residues 1–78 (MADHNPDGDP…IGRSAHVQAR (78 aa)) form a disordered region. Residues 18–27 (RVLDTADPRT) show a composition bias toward basic and acidic residues. Residues 45–57 (TASSRRLSGQTKT) are compositionally biased toward polar residues. Ser-47 carries the phosphoserine modification. The residue at position 85 (Thr-85) is a Phosphothreonine. The segment at 93 to 421 (ILLTAPESSI…RHHQFPEPAP (329 aa)) is flexible stalk domain. 3 disordered regions span residues 114–134 (APQV…ELQL), 256–293 (HSLP…GKPA), and 314–457 (SSGV…DPHK). Residues 276–289 (RTQSSGPGLQNNSP) show a composition bias toward polar residues. Residues 329 to 341 (GVEEAEKKMKEEG) show a composition bias toward basic and acidic residues. Phosphoserine is present on residues Ser-343, Ser-345, Ser-356, Ser-373, Ser-385, Ser-386, and Ser-397. Over residues 365–376 (TQVTEAEGSQGT) the composition is skewed to polar residues. A compositionally biased stretch (low complexity) spans 439–450 (RCPPRSRTTGPR).

Belongs to the CENP-T/CNN1 family. As to quaternary structure, component of the CENPA-CAD complex, composed of CENPI, CENPK, CENPL, CENPO, CENPP, CENPQ, CENPR and CENPS. The CENPA-CAD complex is probably recruited on centromeres by the CENPA-NAC complex, at least composed of CENPA, CENPC, CENPH, CENPM, CENPN, CENPT and CENPU. Identified in a centromeric complex containing histones H2A, H2B, H3 and H4, and at least CENPA, CENPB, CENPC, CENPT, CENPN, HJURP, SUPT16H, SSRP1 and RSF1. Interacts (via N-terminus) with the NDC80 complex. Heterodimer with CENPW; this dimer coassembles with CENPS-CENPX heterodimers at centromeres to form the tetrameric CENP-T-W-S-X complex. Post-translationally, dynamically phosphorylated during the cell cycle. Phosphorylated during G2 phase, metaphase and anaphase, but not during telophase or G1 phase.

Its subcellular location is the nucleus. It localises to the chromosome. The protein localises to the centromere. It is found in the kinetochore. Functionally, component of the CENPA-NAC (nucleosome-associated) complex, a complex that plays a central role in assembly of kinetochore proteins, mitotic progression and chromosome segregation. The CENPA-NAC complex recruits the CENPA-CAD (nucleosome distal) complex and may be involved in incorporation of newly synthesized CENPA into centromeres. Part of a nucleosome-associated complex that binds specifically to histone H3-containing nucleosomes at the centromere, as opposed to nucleosomes containing CENPA. Component of the heterotetrameric CENP-T-W-S-X complex that binds and supercoils DNA, and plays an important role in kinetochore assembly. CENPT has a fundamental role in kinetochore assembly and function. It is one of the inner kinetochore proteins, with most further proteins binding downstream. Required for normal chromosome organization and normal progress through mitosis. This Macaca fascicularis (Crab-eating macaque) protein is Centromere protein T (CENPT).